We begin with the raw amino-acid sequence, 176 residues long: Transcription termination/antitermination protein NusG (176 aa).

Positions 125–149 (GEVVRVVEGPFANFTATVEEYDVEH) constitute a KOW domain.

The protein belongs to the NusG family.

Participates in transcription elongation, termination and antitermination. The chain is Transcription termination/antitermination protein NusG from Helicobacter pylori (strain J99 / ATCC 700824) (Campylobacter pylori J99).